An 862-amino-acid chain; its full sequence is Short transient receptor potential channel 7 (862 aa).

A disordered region spans residues 1–21 (MLGSNTFKNMQRRHTTLREKG). The Cytoplasmic portion of the chain corresponds to 1 to 351 (MLGSNTFKNM…GLRQQSIAVK (351 aa)). Residues 10–21 (MQRRHTTLREKG) are compositionally biased toward basic residues. Thr-15 is subject to Phosphothreonine; by PKG/PRKG1. ANK repeat units lie at residues 42 to 71 (PEEE…TLNF), 77 to 106 (MGQN…LARV), 108 to 134 (DALL…FAQG), and 163 to 192 (HDIT…RIER). The chain crosses the membrane as a helical span at residues 352–372 (FLAVFGVSIGLPFLAIAYWIA). Topologically, residues 373 to 383 (PCSKLGQTLRS) are extracellular. The helical transmembrane segment at 384-404 (PFMKFVAHAVSFTIFLGLLVV) threads the bilayer. Over 405-465 (NASDRFEGVK…KEIWEEGPRE (61 aa)) the chain is Cytoplasmic. The helical transmembrane segment at 466 to 486 (YVLHLWNLLDFGMLSIFVASF) threads the bilayer. Topologically, residues 487-537 (TARFMAFLKASEAQLYVDQYVQDVTLHNVSLPPEVAYFTYARDKWWPSDPQ) are extracellular. Asn-514 carries N-linked (GlcNAc...) asparagine glycosylation. Residues 538–558 (IISEGLYAIAVVLSFSRIAYI) traverse the membrane as a helical segment. Topologically, residues 559-581 (LPANESFGPLQISLGRTVKDIFK) are cytoplasmic. Residues 582–602 (FMVIFIMVFVAFMIGMFNLYS) traverse the membrane as a helical segment. At 603 to 651 (YYRGAKYNPAFTTVEESFKTLFWSIFGLSEVISVVLKYDHKFIENIGYV) the chain is on the extracellular side. Residues 652–672 (LYGVYNVTMVVVLLNMLIAMI) traverse the membrane as a helical segment. The Cytoplasmic segment spans residues 673–862 (NNSYQEIEED…HLRVNQGKDI (190 aa)).

This sequence belongs to the transient receptor (TC 1.A.4) family. STrpC subfamily. TRPC7 sub-subfamily. As to quaternary structure, interacts with MX1 and RNF24. Interacts (via ANK-repeat domains) with PRKG1. Phosphorylation by PRKG1 at Thr-15 negatively regulates TRPC7 activity.

The protein localises to the cell membrane. It is found in the nucleus envelope. It catalyses the reaction Ca(2+)(in) = Ca(2+)(out). Forms a receptor-activated non-selective calcium permeant cation channel. Probably is operated by a phosphatidylinositol second messenger system activated by receptor tyrosine kinases or G-protein coupled receptors. Activated by diacylglycerol (DAG). May also be activated by intracellular calcium store depletion. The protein is Short transient receptor potential channel 7 (Trpc7) of Mus musculus (Mouse).